The sequence spans 206 residues: Musculin (206 aa).

Residues 1–115 (MSTGSVSDPE…QSQRNAANAR (115 aa)) are disordered. Residues 46 to 56 (SAEEEDPDGEE) show a composition bias toward acidic residues. The Nuclear localization signal motif lies at 71-76 (KRKRPR). Over residues 78–92 (AGGGGAGGSAGGGGK) the composition is skewed to gly residues. Over residues 93-102 (KPLPAKGSAA) the composition is skewed to low complexity. One can recognise a bHLH domain in the interval 107–159 (SQRNAANARERARMRVLSKAFSRLKTSLPWVPPDTKLSKLDTLRLASSYIAHL).

In terms of assembly, efficient DNA binding requires dimerization with another bHLH protein. Binds DNA as a homodimer or a heterodimer. Forms a heterodimer with TCF3. As to expression, expressed in lymphoid tissues, B-cell lines and activated B-cells.

Its subcellular location is the nucleus. In terms of biological role, transcription repressor capable of inhibiting the transactivation capability of TCF3/E47. May play a role in regulating antigen-dependent B-cell differentiation. In Homo sapiens (Human), this protein is Musculin (MSC).